A 1165-amino-acid polypeptide reads, in one-letter code: Tectonin beta-propeller repeat-containing protein 1 (1165 aa).

TECPR repeat units follow at residues 209–240 (LSVW…SLLD), 254–285 (DLLW…SIVE), 301–332 (SVVW…IEMV), and 344–376 (DQVW…KAII). Serine 386, serine 388, serine 391, serine 412, and serine 417 each carry phosphoserine. Residues 404 to 486 (RGSGESAPSD…GPAPTPAELP (83 aa)) form a disordered region. The region spanning 611-717 (KTGALQWWCD…WLALLSLSCC (107 aa)) is the PH domain. The stretch at 729-756 (QAIWSITCKGDIFVSEPSPDLEAHEHPL) is one TECPR 5 repeat. Serine 938 and serine 949 each carry phosphoserine. TECPR repeat units follow at residues 953-984 (IALW…LHVG), 998-1029 (YQVW…YHIP), 1044-1075 (TSVY…EHVS), and 1087-1127 (DQVW…DYGI). The segment at 1140-1165 (ATRAPRSSSQEQEPSAPPEAHGPVCC) is disordered. The span at 1143-1153 (APRSSSQEQEP) shows a compositional bias: low complexity.

It belongs to the TECPR1 family. In terms of assembly, interacts with ATG5; the interaction is direct. Interacts with WIPI2. Interacts with the ATG5-ATG12 conjugate, the interaction is however mutually exclusive with ATG16, since it does not interact with ATG12-ATG5-ATG16 complex.

Its subcellular location is the cytoplasmic vesicle. It localises to the autophagosome membrane. The protein resides in the lysosome membrane. Its function is as follows. Tethering factor involved in autophagy. Involved in autophagosome maturation by promoting the autophagosome fusion with lysosomes: acts by associating with both the ATG5-ATG12 conjugate and phosphatidylinositol-3-phosphate (PtdIns(3)P) present at the surface of autophagosomes. Also involved in selective autophagy against bacterial pathogens, by being required for phagophore/preautophagosomal structure biogenesis and maturation. This Homo sapiens (Human) protein is Tectonin beta-propeller repeat-containing protein 1 (TECPR1).